A 475-amino-acid chain; its full sequence is Ribulose bisphosphate carboxylase large chain (475 aa).

Positions Met1–Ser2 are excised as a propeptide. Pro3 carries the post-translational modification N-acetylproline. An N6,N6,N6-trimethyllysine modification is found at Lys14. 2 residues coordinate substrate: Asn123 and Thr173. The active-site Proton acceptor is Lys175. Position 177 (Lys177) interacts with substrate. Mg(2+)-binding residues include Lys201, Asp203, and Glu204. Lys201 carries the post-translational modification N6-carboxylysine. The active-site Proton acceptor is the His294. Residues Arg295, His327, and Ser379 each contribute to the substrate site.

This sequence belongs to the RuBisCO large chain family. Type I subfamily. As to quaternary structure, heterohexadecamer of 8 large chains and 8 small chains; disulfide-linked. The disulfide link is formed within the large subunit homodimers. It depends on Mg(2+) as a cofactor. In terms of processing, the disulfide bond which can form in the large chain dimeric partners within the hexadecamer appears to be associated with oxidative stress and protein turnover.

Its subcellular location is the plastid. The protein localises to the chloroplast. The enzyme catalyses 2 (2R)-3-phosphoglycerate + 2 H(+) = D-ribulose 1,5-bisphosphate + CO2 + H2O. It catalyses the reaction D-ribulose 1,5-bisphosphate + O2 = 2-phosphoglycolate + (2R)-3-phosphoglycerate + 2 H(+). RuBisCO catalyzes two reactions: the carboxylation of D-ribulose 1,5-bisphosphate, the primary event in carbon dioxide fixation, as well as the oxidative fragmentation of the pentose substrate in the photorespiration process. Both reactions occur simultaneously and in competition at the same active site. The polypeptide is Ribulose bisphosphate carboxylase large chain (Clarkia xantiana (Gunsight clarkia)).